A 141-amino-acid polypeptide reads, in one-letter code: Large ribosomal subunit protein uL11c (141 aa).

This sequence belongs to the universal ribosomal protein uL11 family. As to quaternary structure, part of the ribosomal stalk of the 50S ribosomal subunit. Interacts with L10 and the large rRNA to form the base of the stalk. L10 forms an elongated spine to which L12 dimers bind in a sequential fashion forming a multimeric L10(L12)X complex.

Its subcellular location is the plastid. The protein localises to the chloroplast. Its function is as follows. Forms part of the ribosomal stalk which helps the ribosome interact with GTP-bound translation factors. The polypeptide is Large ribosomal subunit protein uL11c (Guillardia theta (Cryptophyte)).